A 1334-amino-acid polypeptide reads, in one-letter code: Aldehyde oxidase 1 (1334 aa).

Residues 5 to 92 (PELLFYVNGR…GAAVTTVEGI (88 aa)) form the 2Fe-2S ferredoxin-type domain. Residues Cys-44, Cys-49, Cys-52, and Cys-74 each contribute to the [2Fe-2S] cluster site. Residue Gln-113 coordinates Mo-molybdopterin. Cys-114, Cys-117, Cys-149, and Cys-151 together coordinate [2Fe-2S] cluster. A Mo-molybdopterin-binding site is contributed by Cys-151. Positions 236 to 421 (FSGERMMWIS…ASVHIPYSRK (186 aa)) constitute an FAD-binding PCMH-type domain. FAD is bound by residues 264–271 (VVMGNTSV), Ala-345, Ser-354, His-358, Asp-367, and Leu-411. Mo-molybdopterin is bound by residues 802 to 803 (AF) and Met-1043. Position 1064 is a phosphoserine (Ser-1064). Mo-molybdopterin contacts are provided by residues 1084–1087 (GSVV), Gln-1199, and Leu-1264. Residue Glu-1266 is the Proton acceptor; for azaheterocycle hydroxylase activity of the active site.

It belongs to the xanthine dehydrogenase family. As to quaternary structure, homodimer. It depends on [2Fe-2S] cluster as a cofactor. The cofactor is FAD. Mo-molybdopterin is required as a cofactor. Post-translationally, the N-terminus is blocked. Very high expression in liver and lung. High expression in kidney, pancreas, brain stem and spinal cord. Moderate expression in heart, testis, eye, cerebral cortex and cerebellum. Low expression in stomach and muscle.

Its subcellular location is the cytoplasm. It catalyses the reaction an aldehyde + O2 + H2O = a carboxylate + H2O2 + H(+). The enzyme catalyses retinal + O2 + H2O = retinoate + H2O2 + H(+). The catalysed reaction is all-trans-retinal + O2 + H2O = all-trans-retinoate + H2O2 + H(+). Inhibited by hydralazine and menadione. Not inhibited by BOF-4272 or allopurinol, xanthine dehydrogenase potent inhibitors. In contrast to guinea pig, human and rat, isovanillin is not an inhibitor but a substrate for AOX1 in rabbit. In terms of biological role, oxidase with broad substrate specificity, oxidizing aromatic azaheterocycles, such as N1-methylnicotinamide, N-methylphthalazinium and phthalazine, as well as aldehydes, such as benzaldehyde, retinal, pyridoxal, and vanillin. Plays a key role in the metabolism of xenobiotics and drugs containing aromatic azaheterocyclic substituents. Participates in the bioactivation of prodrugs such as famciclovir, catalyzing the oxidation step from 6-deoxypenciclovir to penciclovir, which is a potent antiviral agent. Is probably involved in the regulation of reactive oxygen species homeostasis. May be a prominent source of superoxide generation via the one-electron reduction of molecular oxygen. May also catalyze nitric oxide (NO) production via the reduction of nitrite to NO with NADH or aldehyde as electron donor. May play a role in adipogenesis. Cannot use hypoxanthine and all-trans-retinol as substrate. In Oryctolagus cuniculus (Rabbit), this protein is Aldehyde oxidase 1.